The chain runs to 228 residues: Ankyrin repeat domain-containing protein 46 (228 aa).

ANK repeat units lie at residues 11–40 (QTNV…DPNI), 44–73 (RGRT…DLLA), 77–103 (QGNT…KIDI), and 107–138 (QGAT…EVKG). Residues 195–215 (VLLLIFVIALLSLGIAYYVSG) traverse the membrane as a helical segment.

The protein resides in the membrane. This is Ankyrin repeat domain-containing protein 46 (ANKRD46) from Pongo abelii (Sumatran orangutan).